The sequence spans 481 residues: 6-phosphogluconate dehydrogenase, decarboxylating (481 aa).

Residues 11–16 (GLAVMG), 34–36 (NRT), 76–78 (VKG), and Asn-104 each bind NADP(+). Residues Asn-104 and 130-132 (SGG) contribute to the substrate site. Lys-184 serves as the catalytic Proton acceptor. 187 to 188 (HN) is a binding site for substrate. Glu-191 (proton donor) is an active-site residue. Residues Tyr-192, Lys-259, Arg-286, Arg-445, and His-451 each coordinate substrate.

Belongs to the 6-phosphogluconate dehydrogenase family. Homodimer.

The catalysed reaction is 6-phospho-D-gluconate + NADP(+) = D-ribulose 5-phosphate + CO2 + NADPH. It functions in the pathway carbohydrate degradation; pentose phosphate pathway; D-ribulose 5-phosphate from D-glucose 6-phosphate (oxidative stage): step 3/3. Its function is as follows. Catalyzes the oxidative decarboxylation of 6-phosphogluconate to ribulose 5-phosphate and CO(2), with concomitant reduction of NADP to NADPH. This is 6-phosphogluconate dehydrogenase, decarboxylating (Pgd) from Drosophila simulans (Fruit fly).